Here is a 245-residue protein sequence, read N- to C-terminus: MKVVVIIPARYGSTRFEAKPLALIAGKPMIQRVYERAAAASSVTGVAVATDDERIVSAVEKFGGKAVMTSDACRSGTDRVFEAGRTLGLTGSDIVVNVQGDQPVFDPECIDEVTAPLIGDPGTGMTTLAFAIVNEREMTDPKDVKMVFDQDGWALYFSRATIPHDRDGNMEFDTYKHLGVYAYTMDFLAEFCSLPEGHLEKIEKLEQLRALEYGLGIKTVVTAYDSPEVDLPEDIARIEALLKDQ.

This sequence belongs to the KdsB family.

The protein resides in the cytoplasm. The catalysed reaction is 3-deoxy-alpha-D-manno-oct-2-ulosonate + CTP = CMP-3-deoxy-beta-D-manno-octulosonate + diphosphate. It functions in the pathway nucleotide-sugar biosynthesis; CMP-3-deoxy-D-manno-octulosonate biosynthesis; CMP-3-deoxy-D-manno-octulosonate from 3-deoxy-D-manno-octulosonate and CTP: step 1/1. Its pathway is bacterial outer membrane biogenesis; lipopolysaccharide biosynthesis. Activates KDO (a required 8-carbon sugar) for incorporation into bacterial lipopolysaccharide in Gram-negative bacteria. This is 3-deoxy-manno-octulosonate cytidylyltransferase from Desulfatibacillum aliphaticivorans.